A 563-amino-acid polypeptide reads, in one-letter code: Rhotekin (563 aa).

Arg-14 is modified (omega-N-methylarginine). The REM-1 domain occupies 17–98 (ALEMEFKRGR…LQRRKEAQVL (82 aa)). Residues Ser-30 and Ser-106 each carry the phosphoserine modification. The tract at residues 96–116 (QVLGKTSRRPSDSGPPAERSP) is disordered. Residue Arg-230 is modified to Asymmetric dimethylarginine. The residue at position 232 (Ser-232) is a Phosphoserine. Positions 309–416 (QPTASGTLRV…WMEALWQLFF (108 aa)) constitute a PH domain. The interval 518-563 (TFSLDAVPPDHSPRARSVAPLPPQRSPRTRGLCSKGQPRTWLQSPV) is disordered. 3 positions are modified to phosphoserine: Ser-520, Ser-529, and Ser-543.

As to quaternary structure, interacts via its C-terminal region with the TAX1BP3 PDZ domain. This interaction facilitates Rho-mediated activation of the c-Fos serum response element (SRE). Interacts with SEPT9. Specifically binds to GTP-bound RHOA, RHOB and RHOC and inhibits their GTPase activity. As to expression, highly expressed in prostate, moderately in kidney, heart, brain, spleen, testis, placenta, small intestine, pancreas, skeletal muscle and peripheral blood leukocytes, and weakly in ovary, colon and thymus. Weakly expressed in all normal cell lines tested. Overexpressed in various cancer cell lines.

Functionally, mediates Rho signaling to activate NF-kappa-B and may confer increased resistance to apoptosis to cells in gastric tumorigenesis. May play a novel role in the organization of septin structures. The chain is Rhotekin from Homo sapiens (Human).